The chain runs to 265 residues: Tryptophan synthase alpha chain (265 aa).

Catalysis depends on proton acceptor residues Glu-49 and Asp-60.

The protein belongs to the TrpA family. In terms of assembly, tetramer of two alpha and two beta chains.

It carries out the reaction (1S,2R)-1-C-(indol-3-yl)glycerol 3-phosphate + L-serine = D-glyceraldehyde 3-phosphate + L-tryptophan + H2O. The protein operates within amino-acid biosynthesis; L-tryptophan biosynthesis; L-tryptophan from chorismate: step 5/5. Its function is as follows. The alpha subunit is responsible for the aldol cleavage of indoleglycerol phosphate to indole and glyceraldehyde 3-phosphate. The sequence is that of Tryptophan synthase alpha chain from Ralstonia nicotianae (strain ATCC BAA-1114 / GMI1000) (Ralstonia solanacearum).